Reading from the N-terminus, the 552-residue chain is Hydroxylamine reductase (552 aa).

[4Fe-4S] cluster contacts are provided by Cys-3, Cys-6, Cys-15, and Cys-21. 8 residues coordinate hybrid [4Fe-2O-2S] cluster: His-247, Glu-271, Cys-315, Cys-407, Cys-435, Cys-460, Glu-495, and Lys-497. The residue at position 407 (Cys-407) is a Cysteine persulfide.

This sequence belongs to the HCP family. [4Fe-4S] cluster is required as a cofactor. The cofactor is hybrid [4Fe-2O-2S] cluster.

Its subcellular location is the cytoplasm. It carries out the reaction A + NH4(+) + H2O = hydroxylamine + AH2 + H(+). In terms of biological role, catalyzes the reduction of hydroxylamine to form NH(3) and H(2)O. In Thermosipho melanesiensis (strain DSM 12029 / CIP 104789 / BI429), this protein is Hydroxylamine reductase.